The primary structure comprises 51 residues: AANQHLCGSHLVEALYLVCGERGFFYSPKTGIVEQCCENPCSLYQLENYCN.

Intrachain disulfides connect Cys7–Cys37, Cys19–Cys50, and Cys36–Cys41.

The protein belongs to the insulin family. Heterodimer of a B chain and an A chain linked by two disulfide bonds.

The protein resides in the secreted. Insulin decreases blood glucose concentration. It increases cell permeability to monosaccharides, amino acids and fatty acids. It accelerates glycolysis, the pentose phosphate cycle, and glycogen synthesis in liver. The chain is Insulin (INS) from Anser anser anser (Western greylag goose).